The chain runs to 163 residues: MLRKLILITVATVFFACQLLVNPVSALELDEESRTVQYNEQGDEVVISIKEAERGKRLFNDTCAQCHLGGVTKTNPNVGLSLEALERAEPPRDNIAGLIDYMKNPTTYDGEIDIKEIHPNTVRSDILPERRNLTDDDLEAIAAHILSQPKSPRKQWGDGKVYN.

An N-terminal signal peptide occupies residues 1 to 26 (MLRKLILITVATVFFACQLLVNPVSA). 4 residues coordinate heme c: cysteine 63, cysteine 66, histidine 67, and histidine 118.

It belongs to the cytochrome c family. PsbV subfamily. As to quaternary structure, PSII is composed of 1 copy each of membrane proteins PsbA, PsbB, PsbC, PsbD, PsbE, PsbF, PsbH, PsbI, PsbJ, PsbK, PsbL, PsbM, PsbT, PsbX, PsbY, PsbZ, Psb30/Ycf12, peripheral proteins PsbO, CyanoQ (PsbQ), PsbU, PsbV and a large number of cofactors. It forms dimeric complexes. The cofactor is heme c.

Its subcellular location is the cellular thylakoid membrane. In terms of biological role, one of the extrinsic, lumenal subunits of photosystem II (PSII). PSII is a light-driven water plastoquinone oxidoreductase, using light energy to abstract electrons from H(2)O, generating a proton gradient subsequently used for ATP formation. The extrinsic proteins stabilize the structure of photosystem II oxygen-evolving complex (OEC), the ion environment of oxygen evolution and protect the OEC against heat-induced inactivation. Low-potential cytochrome c that plays a role in the OEC of PSII. The chain is Photosystem II extrinsic protein V from Aphanothece halophytica.